A 364-amino-acid polypeptide reads, in one-letter code: MIIDTTEVQAINSFSRSESSKEFYGLIWLLVPIFTPVSGILIGVLVIVWLEREISAGIQQRIGPEYAGPLGILQALADGTKLLFKEDLLPSRGDIRLFSVGPSIAVISILLSYSVIPFGYRLIIADISIGVFLWIAISSIAPIGLLMSGYGSNNKYSFSGGLRAAAQSISYEIPLTPCVLSISLRLSNSSSTVDIVEAQSKYGFCGWNLWRQPIGFIVFLISSLAECERLPFDLPEAEEELVAGYQTEYSGIKSGLFYVASYLNLLVSSLFVTVLYLGGWNLSIPYISIPELFGINKTGGVFGSTIGILITLAKAYLFLFVPITTRWTLPRMRMDQLLNLGWKFLLPIALGNLLLTTSSQLLSF.

Transmembrane regions (helical) follow at residues 27–47, 98–118, 127–147, 255–275, 301–321, and 337–357; these read IWLLVPIFTPVSGILIGVLVI, FSVGPSIAVISILLSYSVIPF, ISIGVFLWIAISSIAPIGLLM, GLFYVASYLNLLVSSLFVTVL, VFGSTIGILITLAKAYLFLFV, and LLNLGWKFLLPIALGNLLLTT.

The protein belongs to the complex I subunit 1 family. As to quaternary structure, NDH is composed of at least 16 different subunits, 5 of which are encoded in the nucleus.

The protein resides in the plastid. Its subcellular location is the chloroplast thylakoid membrane. It catalyses the reaction a plastoquinone + NADH + (n+1) H(+)(in) = a plastoquinol + NAD(+) + n H(+)(out). The enzyme catalyses a plastoquinone + NADPH + (n+1) H(+)(in) = a plastoquinol + NADP(+) + n H(+)(out). Functionally, NDH shuttles electrons from NAD(P)H:plastoquinone, via FMN and iron-sulfur (Fe-S) centers, to quinones in the photosynthetic chain and possibly in a chloroplast respiratory chain. The immediate electron acceptor for the enzyme in this species is believed to be plastoquinone. Couples the redox reaction to proton translocation, and thus conserves the redox energy in a proton gradient. The chain is NAD(P)H-quinone oxidoreductase subunit 1, chloroplastic from Illicium oligandrum (Star anise).